The primary structure comprises 138 residues: Large ribosomal subunit protein uL16 (138 aa).

Belongs to the universal ribosomal protein uL16 family. Part of the 50S ribosomal subunit.

Functionally, binds 23S rRNA and is also seen to make contacts with the A and possibly P site tRNAs. The chain is Large ribosomal subunit protein uL16 from Chlamydia pneumoniae (Chlamydophila pneumoniae).